Here is a 214-residue protein sequence, read N- to C-terminus: External core antigen (214 aa).

The first 19 residues, 1-19 (MQLFHLCLIISCTCPTVQA), serve as a signal peptide directing secretion. An HBEAG region spans residues 25–27 (GWL). The tract at residues 165-214 (NAPILSTLPETTVVRRRDRGRSPRRRTPSPRRRRSQSPRRRRSQSRESQC) is disordered. A compositionally biased stretch (basic residues) spans 178-207 (VRRRDRGRSPRRRTPSPRRRRSQSPRRRRS). Residues 186–192 (SPRRRTP) form a 1; half-length repeat. Residues 186-208 (SPRRRTPSPRRRRSQSPRRRRSQ) form a 3 X 8 AA repeats of S-P-R-R-R-R-S-Q region. The propeptide occupies 186 to 214 (SPRRRTPSPRRRRSQSPRRRRSQSRESQC). 2 consecutive repeat copies span residues 193-200 (SPRRRRSQ) and 201-208 (SPRRRRSQ).

Belongs to the orthohepadnavirus precore antigen family. As to quaternary structure, homodimerizes. Phosphorylated. Post-translationally, cleaved by host furin.

Its subcellular location is the secreted. It localises to the host nucleus. May regulate immune response to the intracellular capsid in acting as a T-cell tolerogen, by having an immunoregulatory effect which prevents destruction of infected cells by cytotoxic T-cells. This immune regulation may predispose to chronicity during perinatal infections and prevent severe liver injury during adult infections. In Homo sapiens (Human), this protein is External core antigen.